We begin with the raw amino-acid sequence, 511 residues long: GMP synthase [glutamine-hydrolyzing] (511 aa).

The Glutamine amidotransferase type-1 domain maps to 5 to 195 (DILVLDFGSQ…AKYACNCESV (191 aa)). Cys82 (nucleophile) is an active-site residue. Catalysis depends on residues His169 and Glu171. A GMPS ATP-PPase domain is found at 196 to 386 (WNMGSFAKTQ…LGLSKEVVYR (191 aa)). 223–229 (SGGVDSS) contributes to the ATP binding site.

Homodimer.

The catalysed reaction is XMP + L-glutamine + ATP + H2O = GMP + L-glutamate + AMP + diphosphate + 2 H(+). Its pathway is purine metabolism; GMP biosynthesis; GMP from XMP (L-Gln route): step 1/1. In terms of biological role, catalyzes the synthesis of GMP from XMP. In Campylobacter jejuni subsp. jejuni serotype O:23/36 (strain 81-176), this protein is GMP synthase [glutamine-hydrolyzing].